Here is a 343-residue protein sequence, read N- to C-terminus: Mas-related G-protein coupled receptor member F (343 aa).

Topologically, residues 1–44 (MAGNCSWEAHPGNRNKMCPGLSEAPELYSRGFLTIEQIAMLPPP) are extracellular. Asn-4 is a glycosylation site (N-linked (GlcNAc...) asparagine). Residues 45–66 (AVMNYIFLLLCLCGLVGNGLVL) form a helical membrane-spanning segment. The Cytoplasmic segment spans residues 67–82 (WFFGFSIKRNPFSIYF). Residues 83 to 104 (LHLASADVGYLFSKAVFSILNT) form a helical membrane-spanning segment. Residues 105-123 (GGFLGTFADYIRSVCRVLG) are Extracellular-facing. A helical transmembrane segment spans residues 124–144 (LCMFLTGVSLLPAVSAERCAS). Topologically, residues 145–160 (VIFPAWYWRRRPKRLS) are cytoplasmic. A helical transmembrane segment spans residues 161–181 (AVVCALLWVLSLLVTCLHNYF). The Extracellular segment spans residues 182 to 198 (CVFLGRGAPGAACRHMD). Residues 199–220 (IFLGILLFLLCCPLMVLPCLAL) traverse the membrane as a helical segment. Topologically, residues 221 to 241 (ILHVECRARRRQRSAKLNHVI) are cytoplasmic. The chain crosses the membrane as a helical span at residues 242–263 (LAMVSVFLVSSIYLGIDWFLFW). The Extracellular portion of the chain corresponds to 264–273 (VFQIPAPFPE). A helical transmembrane segment spans residues 274–294 (YVTDLCICINSSAKPIVYFLA). Over 295 to 343 (GRDKSQRLWEPLRVVFQRALRDGAELGEAGGSTPNTVTMEMQCPPGNAS) the chain is Cytoplasmic. Residues 320 to 343 (LGEAGGSTPNTVTMEMQCPPGNAS) form a disordered region.

Belongs to the G-protein coupled receptor 1 family. Mas subfamily.

The protein localises to the cell membrane. Functionally, orphan receptor. May bind to a neuropeptide and may regulate nociceptor function and/or development, including the sensation or modulation of pain. This chain is Mas-related G-protein coupled receptor member F (MRGPRF), found in Homo sapiens (Human).